The sequence spans 78 residues: Serine rich endogenous peptide 19 (78 aa).

A signal peptide spans 1 to 25; that stretch reads MCNIVVFLLTLTLFLFSGLSNTAFA. The short motif at 50–64 is the SCOOP motif element; the sequence is KIEVDGSCSRRAPGR. A SxS motif essential for MIK2 binding motif is present at residues 56–58; sequence SCS. A disordered region spans residues 57 to 78; it reads CSRRAPGRRRPPNRPPKPCTKP. Pro residues predominate over residues 69–78; it reads NRPPKPCTKP.

Belongs to the serine rich endogenous peptide (SCOOP) phytocytokine family. As to quaternary structure, interacts with MIK2 (via extracellular leucine-rich repeat domain); this interaction triggers the formation of complex between MIK2 and the BAK1/SERK3 and SERK4 coreceptors, and subsequent BAK1 activation by phosphorylation.

The protein localises to the cell membrane. It localises to the secreted. The protein resides in the extracellular space. Its subcellular location is the apoplast. Brassicaceae-specific phytocytokine (plant endogenous peptide released into the apoplast) perceived by MIK2 in a BAK1/SERK3 and SERK4 coreceptors-dependent manner, that modulates various physiological and antimicrobial processes including growth prevention and reactive oxygen species (ROS) response regulation. The protein is Serine rich endogenous peptide 19 of Arabidopsis thaliana (Mouse-ear cress).